A 344-amino-acid chain; its full sequence is Uroporphyrinogen decarboxylase (344 aa).

Substrate is bound by residues 26-30 (RQAGR), Asp75, Tyr150, Ser205, and His323.

This sequence belongs to the uroporphyrinogen decarboxylase family. Homodimer.

The protein resides in the cytoplasm. The enzyme catalyses uroporphyrinogen III + 4 H(+) = coproporphyrinogen III + 4 CO2. The protein operates within porphyrin-containing compound metabolism; protoporphyrin-IX biosynthesis; coproporphyrinogen-III from 5-aminolevulinate: step 4/4. Catalyzes the decarboxylation of four acetate groups of uroporphyrinogen-III to yield coproporphyrinogen-III. The sequence is that of Uroporphyrinogen decarboxylase from Corynebacterium diphtheriae (strain ATCC 700971 / NCTC 13129 / Biotype gravis).